The sequence spans 174 residues: Gamma-crystallin M3 (174 aa).

2 consecutive Beta/gamma crystallin 'Greek key' domains span residues 2–40 (GKIIFYEDRNFQGRSYECSSDCSDMSTYLSRCHSCRVES) and 41–82 (GCFV…RMVP). The tract at residues 83 to 87 (QYRGP) is connecting peptide. Beta/gamma crystallin 'Greek key' domains are found at residues 88 to 128 (YRMR…HVMD) and 129 to 171 (GHWL…RRIM).

Belongs to the beta/gamma-crystallin family. In terms of assembly, monomer.

Functionally, crystallins are the dominant structural components of the vertebrate eye lens. The sequence is that of Gamma-crystallin M3 from Cyprinus carpio (Common carp).